We begin with the raw amino-acid sequence, 550 residues long: Cytochrome P450 monooxygenase hasH (550 aa).

A helical membrane pass occupies residues Ile39 to Ile59. Cys493 contacts heme.

It belongs to the cytochrome P450 family. It depends on heme as a cofactor.

The protein localises to the membrane. It functions in the pathway secondary metabolite biosynthesis. Cytochrome P450 monooxygenase; part of the gene cluster that mediates the biosynthesis of hexadehydro-astechrome (HAS), a tryptophan-derived iron(III)-complex that acts as a virulence factor in infected mice. Within the pathway, hasH, with the O-methyltransferase hasC and the FAD-linked oxidoreductase hasG, convert the hasE-prenylated Trp-Ala dipeptide into an O-methylated diketopiperazine that is then released from the hasD NRPS. The HAS biosynthesis begins with the synthesis of a tethered Trp-Ala dipeptide by the NRPS hasD. The 7-dimethylallyltryptophan synthase hasE then catalyzes the prenylation of the hasD-tethered tryptophan or the resulting tethered Trp-Ala dipeptide at the C-7 position of the indole moiety. HAS biosynthesis continues via tethered intermediates with the succesive action of the cytochrome P450 monooxygenase hasH, the O-methyltransferase hasC, and the FAD-linked oxidoreductase hasG. The resulting O-methylated diketopiperazine is then released from hasD. Finally, three O-methylated diketopiperazine molecules assemble in a trimeric complex with Fe(III) to produce hexadehydro-astechrome. This Aspergillus fumigatus (strain CBS 144.89 / FGSC A1163 / CEA10) (Neosartorya fumigata) protein is Cytochrome P450 monooxygenase hasH.